The primary structure comprises 82 residues: Putative membrane protein insertion efficiency factor (82 aa).

This sequence belongs to the UPF0161 family.

The protein resides in the cell inner membrane. Could be involved in insertion of integral membrane proteins into the membrane. In Rickettsia felis (strain ATCC VR-1525 / URRWXCal2) (Rickettsia azadi), this protein is Putative membrane protein insertion efficiency factor.